The chain runs to 346 residues: MTDYQSKYSLYKRKYLSLKQKQNGGNNTADNTADNIDPIVKKFVDSIKDAKPVYEVTPEEARKNLNSIQSDQSYKTTVDMENVVVNDKNVNATIIRPKGNRDRLPVVFYVHGAGWVMGGLQTHGRFVSEIVNKANVTVIFVNYSLAPEKKFPTQIVECYDALVYFYSNAQRYNLDFNNIIVVGDSVGGNMATVLAMLTREKTGPRFKYQILLYPVISAAMNTQSYQTFENGPWLSKKSMEWFYEQYTEPNQNLMIPSISPINATDRSIQYLPPTLLVVDENDVLRDEGEAYAHRLSNLGVPTKSVRVLGTIHDFMLLNPLVKSPATKLTLEIVVNEIKRITTPNKN.

Belongs to the AB hydrolase 3 family.

It is found in the virion. This is Putative alpha/beta hydrolase R526 from Acanthamoeba polyphaga mimivirus (APMV).